Here is a 222-residue protein sequence, read N- to C-terminus: MISAKEQAKKGQIIYRYILLKIQSFKWPAGTRIFSERQLEIRFASSRSLIRTILNTLLGKDLIRHTKGNAGYFVAKNAGFSFFHKTQDNKLPKWAKLSTLMKNHLREVDRDVFSSIDSGVDFGNFKGLEAKLFDENKKNFLNLSFFGKDDVLQIFSEQNLQEQFFKDFAYNGIVVERKSSLICVDDETKNLLIYDLFYDDNNKFIVAMRSEYLNPRIKIINA.

Residues 8-77 (AKKGQIIYRY…GNAGYFVAKN (70 aa)) enclose the HTH gntR-type domain.

This is an uncharacterized protein from Mycoplasma pneumoniae (strain ATCC 29342 / M129 / Subtype 1) (Mycoplasmoides pneumoniae).